A 358-amino-acid polypeptide reads, in one-letter code: Isopentenyl-diphosphate delta-isomerase (358 aa).

12–13 contacts substrate; sequence RK. FMN contacts are provided by residues 69–71, serine 99, and asparagine 128; that span reads AMT. Glutamine 158 provides a ligand contact to substrate. Glutamate 159 provides a ligand contact to Mg(2+). Residues lysine 190, threonine 220, 267-269, and 288-289 contribute to the FMN site; these read GIR and AG.

Belongs to the IPP isomerase type 2 family. As to quaternary structure, homooctamer. Dimer of tetramers. It depends on FMN as a cofactor. Requires NADPH as cofactor. Mg(2+) serves as cofactor.

It localises to the cytoplasm. The enzyme catalyses isopentenyl diphosphate = dimethylallyl diphosphate. In terms of biological role, involved in the biosynthesis of isoprenoids. Catalyzes the 1,3-allylic rearrangement of the homoallylic substrate isopentenyl (IPP) to its allylic isomer, dimethylallyl diphosphate (DMAPP). The chain is Isopentenyl-diphosphate delta-isomerase from Listeria monocytogenes serotype 4b (strain F2365).